The chain runs to 151 residues: UPF0178 protein Caul_3070 (151 aa).

The protein belongs to the UPF0178 family.

The protein is UPF0178 protein Caul_3070 of Caulobacter sp. (strain K31).